A 483-amino-acid polypeptide reads, in one-letter code: SWI/SNF-related matrix-associated actin-dependent regulator of chromatin subfamily D member 3 (483 aa).

The residue at position 2 (Ala-2) is an N-acetylalanine. The interval 26–102 is disordered; it reads VRPGMPSGAR…ARSRSAKRRK (77 aa). The segment covering 78-87 has biased composition (low complexity); it reads QSQAQSQGQP. Ser-178 carries the phosphoserine modification. The SWIB/MDM2 domain occupies 258–335; it reads YQPPQFKLDP…PQRLTALLLP (78 aa).

This sequence belongs to the SMARCD family. As to quaternary structure, component of the multiprotein chromatin-remodeling complexes SWI/SNF: SWI/SNF-A (BAF), SWI/SNF-B (PBAF) and related complexes. The canonical complex contains a catalytic subunit (either SMARCA4/BRG1/BAF190A or SMARCA2/BRM/BAF190B) and at least SMARCE1, ACTL6A/BAF53, SMARCC1/BAF155, SMARCC2/BAF170, and SMARCB1/SNF5/BAF47. Other subunits specific to each of the complexes may also be present permitting several possible combinations developmentally and tissue specific. Component of the BAF complex, which includes at least actin (ACTB), ARID1A/BAF250A, ARID1B/BAF250B, SMARCA2/BRM, SMARCA4/BRG1/BAF190A, ACTL6A/BAF53, ACTL6B/BAF53B, SMARCE1/BAF57, SMARCC1/BAF155, SMARCC2/BAF170, SMARCB1/SNF5/INI1, and one or more SMARCD1/BAF60A, SMARCD2/BAF60B, or SMARCD3/BAF60C. In muscle cells, the BAF complex also contains DPF3. Component of neural progenitors-specific chromatin remodeling complex (npBAF complex) composed of at least, ARID1A/BAF250A or ARID1B/BAF250B, SMARCD1/BAF60A, SMARCD3/BAF60C, SMARCA2/BRM/BAF190B, SMARCA4/BRG1/BAF190A, SMARCB1/BAF47, SMARCC1/BAF155, SMARCE1/BAF57, SMARCC2/BAF170, PHF10/BAF45A, ACTL6A/BAF53A and actin. Component of neuron-specific chromatin remodeling complex (nBAF complex) composed of at least, ARID1A/BAF250A or ARID1B/BAF250B, SMARCD1/BAF60A, SMARCD3/BAF60C, SMARCA2/BRM/BAF190B, SMARCA4/BRG1/BAF190A, SMARCB1/BAF47, SMARCC1/BAF155, SMARCE1/BAF57, SMARCC2/BAF170, DPF1/BAF45B, DPF3/BAF45C, ACTL6B/BAF53B and actin. May be a component of the SWI/SNF-B (PBAF) chromatin remodeling complex, at least composed of SMARCA4/BRG1, SMARCB1/BAF47/SNF5, ACTL6A/BAF53A or ACTL6B/BAF53B, SMARCE1/BAF57, SMARCD1/BAF60A, SMARCD2/BAF60B, perhaps SMARCD3/BAF60C, SMARCC1/BAF155, SMARCC2/BAF170, PBRM1/BAF180, ARID2/BAF200 and actin. Interacts with SMARCA4/BRG1/BAF190A. Component of SWI/SNF (GBAF) subcomplex, which includes at least BICRA or BICRAL (mutually exclusive), BRD9, SS18, SMARCA2/BRM, SMARCA4/BRG1/BAF190A, ACTL6A/BAF53, SMARCC1/BAF155, and SMARCD1/BAF60A. The precise distribution of the related SMARCD1, SMARCD2 and SMARCD3 proteins among these and other SWI/SNF nucleosome-remodeling complexes is not fully known. May allow recruitment of SWI/SNF containing complexes specifically to promoters where these factors are located. Also interacts with several nuclear receptors including PPARG/NR1C3, RXRA/NR1F1, ESR1, NR5A1, NR5A2/LRH1 and other transcriptional activators including the HLH protein SREBF1/SREBP1 and the homeobox protein PBX1. Interacts with PRDM1/BLIMP1. Isoform 2 and isoform 1 are expressed in brain, heart, kidney, placenta, prostate, salivary gland, spleen, testis, thyroid, trachea and uterus. Isoform 1 is also expressed in skeletal muscle and adipose tissue.

The protein resides in the nucleus. Involved in transcriptional activation and repression of select genes by chromatin remodeling (alteration of DNA-nucleosome topology). Component of SWI/SNF chromatin remodeling complexes that carry out key enzymatic activities, changing chromatin structure by altering DNA-histone contacts within a nucleosome in an ATP-dependent manner. Stimulates nuclear receptor mediated transcription. Belongs to the neural progenitors-specific chromatin remodeling complex (npBAF complex) and the neuron-specific chromatin remodeling complex (nBAF complex). During neural development a switch from a stem/progenitor to a postmitotic chromatin remodeling mechanism occurs as neurons exit the cell cycle and become committed to their adult state. The transition from proliferating neural stem/progenitor cells to postmitotic neurons requires a switch in subunit composition of the npBAF and nBAF complexes. As neural progenitors exit mitosis and differentiate into neurons, npBAF complexes which contain ACTL6A/BAF53A and PHF10/BAF45A, are exchanged for homologous alternative ACTL6B/BAF53B and DPF1/BAF45B or DPF3/BAF45C subunits in neuron-specific complexes (nBAF). The npBAF complex is essential for the self-renewal/proliferative capacity of the multipotent neural stem cells. The nBAF complex along with CREST plays a role regulating the activity of genes essential for dendrite growth. The polypeptide is SWI/SNF-related matrix-associated actin-dependent regulator of chromatin subfamily D member 3 (SMARCD3) (Homo sapiens (Human)).